The following is a 252-amino-acid chain: N-acetylglucosaminyl-phosphatidylinositol de-N-acetylase (252 aa).

The helical transmembrane segment at Glu-2–Trp-22 threads the bilayer. The Cytoplasmic portion of the chain corresponds to Asn-23 to Leu-252.

The protein belongs to the PIGL family.

The protein localises to the endoplasmic reticulum membrane. The enzyme catalyses a 6-(N-acetyl-alpha-D-glucosaminyl)-1-(1,2-diacyl-sn-glycero-3-phospho)-1D-myo-inositol + H2O = a 6-(alpha-D-glucosaminyl)-1-(1,2-diacyl-sn-glycero-3-phospho)-1D-myo-inositol + acetate. The protein operates within glycolipid biosynthesis; glycosylphosphatidylinositol-anchor biosynthesis. Catalyzes the second step of glycosylphosphatidylinositol (GPI) biosynthesis, which is the de-N-acetylation of N-acetylglucosaminyl-phosphatidylinositol. This chain is N-acetylglucosaminyl-phosphatidylinositol de-N-acetylase (Pigl), found in Rattus norvegicus (Rat).